The primary structure comprises 504 residues: Putative BTB/POZ domain-containing protein R842 (504 aa).

Residues 21-91 form the BTB domain; sequence SDVKLILKDN…FYGFKSPSVT (71 aa).

It belongs to the mimivirus BTB/WD family.

In Acanthamoeba polyphaga (Amoeba), this protein is Putative BTB/POZ domain-containing protein R842.